The sequence spans 471 residues: Citrate synthase, mitochondrial (471 aa).

A mitochondrion-targeting transit peptide spans 1 to 18 (MASLRSATALSRLRSRAG). Active-site residues include histidine 307, histidine 353, and aspartate 408.

It belongs to the citrate synthase family. As to quaternary structure, homodimer.

Its subcellular location is the mitochondrion matrix. It carries out the reaction oxaloacetate + acetyl-CoA + H2O = citrate + CoA + H(+). It participates in carbohydrate metabolism; tricarboxylic acid cycle; isocitrate from oxaloacetate: step 1/2. The polypeptide is Citrate synthase, mitochondrial (CIT) (Citrus maxima (Pomelo)).